A 1342-amino-acid polypeptide reads, in one-letter code: Zinc finger protein 335 (1342 aa).

Disordered stretches follow at residues 1–102 and 201–228; these read MEEN…VTGG and TSTS…AEEP. Residues 34-49 are compositionally biased toward low complexity; it reads AVSADSSDAAAAPGQA. Over residues 201 to 217 the composition is skewed to polar residues; it reads TSTSTCLEAQGGPSSPV. The segment at 245–268 adopts a C2H2-type 1 zinc-finger fold; that stretch reads FKCKMCQYRSSTKATLLRHMRERH. A disordered region spans residues 274–442; it reads AAAAAAGKKG…TLPRRRGRPS (169 aa). The segment covering 297 to 327 has biased composition (acidic residues); sequence EEGPEEEDDDDIVDAGAIDDLEEDSDYNPAE. Positions 346–357 are enriched in basic residues; the sequence is RPRRRPGRPRKL. C2H2-type zinc fingers lie at residues 465–487, 495–517, 523–545, 562–584, 590–612, 621–643, 649–672, and 678–701; these read FLCR…VNSH, FKCL…MFNH, YKCD…AAVH, FPCP…MKTH, HMCD…LLTH, FKCE…QLSH, FKCS…AVKH, and FACE…RCRH. 2 disordered regions span residues 732–763 and 964–1013; these read LKQQ…QSSE and CGGL…SAAT. Residues 740–753 show a composition bias toward pro residues; the sequence is PGPPPSSPGPPEIP. Residues Ser976, Ser992, and Ser1007 each carry the phosphoserine modification. Over residues 986–997 the composition is skewed to low complexity; that stretch reads SQSSASSPPATS. 4 consecutive C2H2-type zinc fingers follow at residues 1019-1041, 1047-1069, 1075-1097, and 1103-1126; these read FSCK…KRAH, FKCP…MAQH, HQCS…MLTH, and FACH…QRLH. Residue Lys1022 forms a Glycyl lysine isopeptide (Lys-Gly) (interchain with G-Cter in SUMO2) linkage. The segment at 1041-1342 is involved in the interaction with CCAR2; the sequence is HAGPGAFKCP…EYDVITLADD (302 aa). Residue Ser1153 is modified to Phosphoserine.

This sequence belongs to the krueppel C2H2-type zinc-finger protein family. As to quaternary structure, interacts with NCOA6; may enhance ligand-dependent transcriptional activation by nuclear hormone receptors. Interacts with CNOT6. Interacts with CNOT9; the interaction is direct. Component of a nuclear receptor-mediated transcription complex composed of at least ZNF335, CCAR2 and EMSY; the complex stimulates the transcription of nuclear receptor target genes such as SOX9 and HOXA1. Within the complex interacts with EMSY and interacts (via C-terminus) with CCAR2. Interacts with members of histone H3'Lys4'(H3K4) methyltransferase complexes ASH2L, CXXC1, KMT2A/MLL1, RBBP5, SETD1A and WDR5. Component of a histone methylation complex composed of at least ZNF335, RBBP5, ASH2L and WDR5; the complex may have histone H3-specific methyltransferase activity, however does not have specificity for 'Lys-4' of histone H3. Interacts with RBBP5 and WDR5. Interacts with ASHL2. Components of this complex may associate with components of the ZNF335-CCAR2-EMSY nuclear receptor-mediated transcription complex to form a complex at least composed of ZNF335, HCFC1, CCAR2, EMSY, MKI67, RBBP5, ASH2L and WDR5. Within this complex also interacts with HCFC1 and MKI67. Ubiquitously expressed.

Its subcellular location is the nucleus. In terms of biological role, component or associated component of some histone methyltransferase complexes may regulate transcription through recruitment of those complexes on gene promoters. Enhances ligand-dependent transcriptional activation by nuclear hormone receptors. Plays an important role in neural progenitor cell proliferation and self-renewal through the regulation of specific genes involved brain development, including REST. Also controls the expression of genes involved in somatic development and regulates, for instance, lymphoblast proliferation. This is Zinc finger protein 335 (ZNF335) from Homo sapiens (Human).